The chain runs to 390 residues: tRNA-specific 2-thiouridylase MnmA (390 aa).

ATP-binding positions include 20-27 and Leu46; that span reads AMSGGVDS. Cys114 serves as the catalytic Nucleophile. A disulfide bridge connects residues Cys114 and Cys211. Residue Gly138 coordinates ATP. The interval 161-163 is interaction with tRNA; the sequence is RDQ. Residue Cys211 is the Cysteine persulfide intermediate of the active site.

Belongs to the MnmA/TRMU family.

It is found in the cytoplasm. The enzyme catalyses S-sulfanyl-L-cysteinyl-[protein] + uridine(34) in tRNA + AH2 + ATP = 2-thiouridine(34) in tRNA + L-cysteinyl-[protein] + A + AMP + diphosphate + H(+). In terms of biological role, catalyzes the 2-thiolation of uridine at the wobble position (U34) of tRNA, leading to the formation of s(2)U34. The polypeptide is tRNA-specific 2-thiouridylase MnmA (Azorhizobium caulinodans (strain ATCC 43989 / DSM 5975 / JCM 20966 / LMG 6465 / NBRC 14845 / NCIMB 13405 / ORS 571)).